Reading from the N-terminus, the 452-residue chain is Ribosomal protein uS12 methylthiotransferase RimO (452 aa).

One can recognise an MTTase N-terminal domain in the interval 5–116; sequence PTIAFSHLGC…IVDVLQRTES (112 aa). [4Fe-4S] cluster-binding residues include Cys14, Cys50, Cys79, Cys154, Cys158, and Cys161. The Radical SAM core domain occupies 140–369; that stretch reads TTTSAVAYLR…MATQQPIAER (230 aa). One can recognise a TRAM domain in the interval 372-438; the sequence is RAQIGRLVDV…IYDLHGEVAS (67 aa).

This sequence belongs to the methylthiotransferase family. RimO subfamily. It depends on [4Fe-4S] cluster as a cofactor.

It localises to the cytoplasm. It catalyses the reaction L-aspartate(89)-[ribosomal protein uS12]-hydrogen + (sulfur carrier)-SH + AH2 + 2 S-adenosyl-L-methionine = 3-methylsulfanyl-L-aspartate(89)-[ribosomal protein uS12]-hydrogen + (sulfur carrier)-H + 5'-deoxyadenosine + L-methionine + A + S-adenosyl-L-homocysteine + 2 H(+). In terms of biological role, catalyzes the methylthiolation of an aspartic acid residue of ribosomal protein uS12. The sequence is that of Ribosomal protein uS12 methylthiotransferase RimO from Synechococcus sp. (strain ATCC 27144 / PCC 6301 / SAUG 1402/1) (Anacystis nidulans).